We begin with the raw amino-acid sequence, 156 residues long: Cyclic pyranopterin monophosphate synthase (156 aa).

Substrate is bound by residues 75-77 and 111-112; these read LCH and ME. The active site involves aspartate 126.

The protein belongs to the MoaC family. As to quaternary structure, homohexamer; trimer of dimers.

It catalyses the reaction (8S)-3',8-cyclo-7,8-dihydroguanosine 5'-triphosphate = cyclic pyranopterin phosphate + diphosphate. The protein operates within cofactor biosynthesis; molybdopterin biosynthesis. Functionally, catalyzes the conversion of (8S)-3',8-cyclo-7,8-dihydroguanosine 5'-triphosphate to cyclic pyranopterin monophosphate (cPMP). The chain is Cyclic pyranopterin monophosphate synthase from Caulobacter sp. (strain K31).